A 293-amino-acid polypeptide reads, in one-letter code: Nucleotide-binding protein Csac_1160 (293 aa).

ATP is bound at residue 11 to 18 (GMSGAGKS). 62-65 (DIRG) contributes to the GTP binding site.

It belongs to the RapZ-like family.

Its function is as follows. Displays ATPase and GTPase activities. The polypeptide is Nucleotide-binding protein Csac_1160 (Caldicellulosiruptor saccharolyticus (strain ATCC 43494 / DSM 8903 / Tp8T 6331)).